A 186-amino-acid chain; its full sequence is PRKR-interacting protein 1 (186 aa).

Residues 1 to 50 are interaction with EIF2AK2; the sequence is MASSAASSVRPPRPKKEPQALIIPKNAAEEQKLKLERLMKNPDKAVPIPE. Disordered stretches follow at residues 39-61 and 119-186; these read MKNP…RPPP and AAEE…ITGR. The tract at residues 51–143 is required for RNA-binding; the sequence is KMSEWAPRPP…LKEKKLLAKK (93 aa). Residues 86 to 153 adopt a coiled-coil conformation; the sequence is RRREYQRQDY…MKLEQKKQSE (68 aa). The interval 126 to 138 is required for nuclear localization; sequence KRRKKRQKLKEKK. Residues 126 to 143 are compositionally biased toward basic residues; that stretch reads KRRKKRQKLKEKKLLAKK. A compositionally biased stretch (polar residues) spans 153 to 162; the sequence is EASSETQEQP. Residues 170 to 179 show a composition bias toward acidic residues; the sequence is SGTEDEEEDA.

This sequence belongs to the PRKRIP1 family. As to quaternary structure, component of the pre-catalytic and post-catalytic spliceosome complexes. Interacts with EIF2AK2.

The protein localises to the nucleus. It is found in the nucleolus. Functionally, required for pre-mRNA splicing as component of the spliceosome. Binds double-stranded RNA. Inhibits EIF2AK2 kinase activity. This chain is PRKR-interacting protein 1 (PRKRIP1), found in Bos taurus (Bovine).